A 256-amino-acid polypeptide reads, in one-letter code: Deoxyribose-phosphate aldolase (256 aa).

D102 functions as the Proton donor/acceptor in the catalytic mechanism. The active-site Schiff-base intermediate with acetaldehyde is the K165. The Proton donor/acceptor role is filled by K197.

This sequence belongs to the DeoC/FbaB aldolase family. DeoC type 2 subfamily.

It localises to the cytoplasm. It carries out the reaction 2-deoxy-D-ribose 5-phosphate = D-glyceraldehyde 3-phosphate + acetaldehyde. Its pathway is carbohydrate degradation; 2-deoxy-D-ribose 1-phosphate degradation; D-glyceraldehyde 3-phosphate and acetaldehyde from 2-deoxy-alpha-D-ribose 1-phosphate: step 2/2. In terms of biological role, catalyzes a reversible aldol reaction between acetaldehyde and D-glyceraldehyde 3-phosphate to generate 2-deoxy-D-ribose 5-phosphate. This is Deoxyribose-phosphate aldolase from Shewanella sp. (strain ANA-3).